The chain runs to 280 residues: 4-deoxy-L-threo-5-hexosulose-uronate ketol-isomerase (280 aa).

Zn(2+) contacts are provided by His-198, His-200, Glu-205, and His-247.

This sequence belongs to the KduI family. Requires Zn(2+) as cofactor.

The enzyme catalyses 5-dehydro-4-deoxy-D-glucuronate = 3-deoxy-D-glycero-2,5-hexodiulosonate. The protein operates within glycan metabolism; pectin degradation; 2-dehydro-3-deoxy-D-gluconate from pectin: step 4/5. Its function is as follows. Catalyzes the isomerization of 5-dehydro-4-deoxy-D-glucuronate to 3-deoxy-D-glycero-2,5-hexodiulosonate. This Lachnospira eligens (strain ATCC 27750 / DSM 3376 / VPI C15-48 / C15-B4) (Eubacterium eligens) protein is 4-deoxy-L-threo-5-hexosulose-uronate ketol-isomerase.